Consider the following 187-residue polypeptide: MSRLLLPKLFSISRTQVPAASLFNNLYRRHKRFVHWTSKMSTDSVRSSTTGGSASGARTFCSLADLSTKKCVPCNAKDLRAMTEQSAQDLLQKVAGWDLANDNDTLKLHRSWRVKSFTKGLDFFQRVADIAESEGHHPDLHLVGWNNVKIEIWTHAIGGLTENDFILAAKINELQVEDLLRKKKVAK.

Residues 1–33 constitute a mitochondrion transit peptide; sequence MSRLLLPKLFSISRTQVPAASLFNNLYRRHKRF.

The protein belongs to the pterin-4-alpha-carbinolamine dehydratase family.

It is found in the mitochondrion. The enzyme catalyses (4aS,6R)-4a-hydroxy-L-erythro-5,6,7,8-tetrahydrobiopterin = (6R)-L-erythro-6,7-dihydrobiopterin + H2O. Involved in tetrahydrobiopterin biosynthesis. Possesses pterin-4-alpha-carbinolamine dehydratase activity when expressed in a bacterial heterolgous system. This is Pterin-4-alpha-carbinolamine dehydratase 2, mitochondrial from Arabidopsis thaliana (Mouse-ear cress).